A 459-amino-acid polypeptide reads, in one-letter code: MESIQPWIEKFIKQAQQQRSQSTKDYPTSYRNLRVKLSFGYGNFTSIPWFAFLGEGQEASNGIYPVILYYKDFDELVLAYGISDTNEPHAQWQFSSDIPKTIAEYFQATSGVYPKKYGQSYYACSQKVSQGIDYTRFASMLDNIINDYKLIFNSGKSVIPPMSKTESYCLEDALNDLFIPETTIETILKRLTIKKNIILQGPPGVGKTFVARRLAYLLTGEKAPQRVNMVQFHQSYSYEDFIQGYRPNGVGFRRKDGIFYNFCQQAKEQPEKKYIFIIDEINRANLSKVFGEVMMLMEHDKRGENWSVPLTYSENDEERFYVPENVYIIGLMNTADRSLAVVDYALRRRFSFIDIEPGFDTPQFRNFLLNKKAEPSFVESLCQKMNELNQEISKEATILGKGFRIGHSYFCCGLEDGTSPDTQWLNEIVMTDIAPLLEEYFFDDPYKQQKWTNKLLGDS.

Residues glycine 201–threonine 208, aspartate 300–glycine 303, and asparagine 333–aspartate 336 each bind GTP.

Recognizes N4- and C5-methylcytosine (and 5-hydroxy-methylcytosines) produced by a broad range of DNA methylases and appears to act against 5-methylcytosine preceded by a purine residue. Binds to DNA containing methylated cytosines; also binds to GTP. Isoform 33 kDa is less active than isoform 51 kDa and may play a role in regulating the activity of isoform 51 kDa by competing with it in DNA and protein binding abilities. This Escherichia coli (strain K12) protein is Type IV methyl-directed restriction enzyme EcoKMcrB subunit (mcrB).